The following is a 318-amino-acid chain: Transcription factor MYBS3 (318 aa).

Disordered stretches follow at residues 1–20 (MTRR…TCPN) and 50–98 (AAGS…PWTE). Residues 3 to 20 (RRCSHCSHNGHNSRTCPN) form a CCHC-type zinc finger. Positions 8-18 (CSHNGHNSRTC) are enriched in polar residues. A compositionally biased stretch (low complexity) spans 50 to 77 (AAGSTSGGASPADGPDAAPTAADGYASD). The region spanning 88–144 (RDRKKGVPWTEEEHRRFLLGLQKLGKGDWRGISRNFVVSRTPTQVASHAQKYFIRQS) is the HTH myb-type domain. Residues 116-140 (WRGISRNFVVSRTPTQVASHAQKYF) constitute a DNA-binding region (H-T-H motif). Residues 159–200 (VPDESMDLPPLPGGQEPETQVLNQPALPPPREEEEVDSMESD) are disordered.

In terms of tissue distribution, expressed in all tissues, with the highest level in senescent leaves.

It localises to the nucleus. In terms of biological role, transcription repressor that binds to 5'-TATCCA-3' elements in gene promoters. Contributes to the sugar-repressed transcription of promoters containing SRS or 5'-TATCCA-3' elements. Transcription repressor involved in a cold stress response pathway that confers cold tolerance. Suppresses the DREB1-dependent signaling pathway under prolonged cold stress. DREB1 responds quickly and transiently while MYBS3 responds slowly to cold stress. They may act sequentially and complementarily for adaptation to short- and long-term cold stress. This Oryza sativa subsp. japonica (Rice) protein is Transcription factor MYBS3.